The primary structure comprises 963 residues: Protocadherin alpha-C1 (963 aa).

Residues 1–18 form the signal peptide; it reads MVGWGVAVLCLWVSCGAA. 5 consecutive Cadherin domains span residues 19-124, 125-233, 234-340, 349-445, and 446-555; these read AGQL…SPLF, PAGD…APVF, ERSV…APEL, VPED…TPSF, and PQPQ…YPVI. The Extracellular segment spans residues 19–683; the sequence is AGQLEYSVPE…GGQLSAQNLY (665 aa). An N-linked (GlcNAc...) asparagine glycan is attached at Asn38. N-linked (GlcNAc...) asparagine glycosylation is found at Asn248 and Asn274. N-linked (GlcNAc...) asparagine glycosylation is present at Asn562. The Cadherin 6 domain maps to 570–667; it reads VPRSARTGHL…NSVPQLLPDF (98 aa). Residues 684-704 traverse the membrane as a helical segment; the sequence is LVIALACISFLFLGCLLFFVC. The Cytoplasmic portion of the chain corresponds to 705–963; sequence TKLHQSPGCC…GNSTTDNSDQ (259 aa). PXXP repeat units follow at residues 812–815, 845–848, 886–889, and 904–907; these read PRQP, PGGP, PGNP, and PGSP. Positions 812–907 are 4 X 4 AA repeats of P-X-X-P; sequence PRQPNPDWRY…PDKFIIPGSP (96 aa). The interval 844-902 is disordered; that stretch reads GPGGPDQQWPTVSSATPEPEAGEVSPPVGAGVNSNSWTFKYGPGNPKQSGPGELPDKFI. Residues 914–963 are disordered; the sequence is QEPANSQIDKSDFITFGKKEETKKKKKKKKGNKTQEKKEKGNSTTDNSDQ. Basic and acidic residues predominate over residues 922–936; sequence DKSDFITFGKKEETK.

The protein localises to the cell membrane. Functionally, potential calcium-dependent cell-adhesion protein. May be involved in the establishment and maintenance of specific neuronal connections in the brain. This Pan troglodytes (Chimpanzee) protein is Protocadherin alpha-C1 (PCDHAC1).